A 640-amino-acid chain; its full sequence is Threonine--tRNA ligase (640 aa).

The TGS domain maps to 1-61 (MPIITLPNGD…TEDATLQIIT (61 aa)). The segment at 242–533 (DHRKIGKALD…LIEHYAGFMP (292 aa)) is catalytic. Positions 333, 384, and 510 each coordinate Zn(2+).

This sequence belongs to the class-II aminoacyl-tRNA synthetase family. In terms of assembly, homodimer. The cofactor is Zn(2+).

Its subcellular location is the cytoplasm. The catalysed reaction is tRNA(Thr) + L-threonine + ATP = L-threonyl-tRNA(Thr) + AMP + diphosphate + H(+). Its function is as follows. Catalyzes the attachment of threonine to tRNA(Thr) in a two-step reaction: L-threonine is first activated by ATP to form Thr-AMP and then transferred to the acceptor end of tRNA(Thr). Also edits incorrectly charged L-seryl-tRNA(Thr). In Acinetobacter baylyi (strain ATCC 33305 / BD413 / ADP1), this protein is Threonine--tRNA ligase.